Consider the following 85-residue polypeptide: Acylphosphatase (85 aa).

The region spanning 3–85 (AARFVVSGVV…PARFRRLKTL (83 aa)) is the Acylphosphatase-like domain. Active-site residues include R18 and N36. The tract at residues 66 to 85 (PPRSRRSRARPARFRRLKTL) is disordered.

It belongs to the acylphosphatase family.

It catalyses the reaction an acyl phosphate + H2O = a carboxylate + phosphate + H(+). In Xanthomonas axonopodis pv. citri (strain 306), this protein is Acylphosphatase (acyP).